The following is a 183-amino-acid chain: Oligoribonuclease (183 aa).

Residues 9–172 (LIWIDLEMTG…DDIRDSISEL (164 aa)) enclose the Exonuclease domain. The active site involves Y130.

It belongs to the oligoribonuclease family.

The protein resides in the cytoplasm. 3'-to-5' exoribonuclease specific for small oligoribonucleotides. In Acinetobacter baylyi (strain ATCC 33305 / BD413 / ADP1), this protein is Oligoribonuclease.